The primary structure comprises 113 residues: Transcription initiation factor IIA subunit 2 (113 aa).

It belongs to the TFIIA subunit 2 family. As to quaternary structure, TFIIA is a heterodimer of the large unprocessed subunit 1 and a small subunit gamma. It was originally believed to be a heterotrimer of an alpha, a beta and a gamma subunit.

Its subcellular location is the nucleus. TFIIA is a component of the transcription machinery of RNA polymerase II and plays an important role in transcriptional activation. TFIIA in a complex with TBP mediates transcriptional activity. This is Transcription initiation factor IIA subunit 2 from Caenorhabditis elegans.